Here is a 43-residue protein sequence, read N- to C-terminus: Defensin-A (43 aa).

Intrachain disulfides connect cysteine 3-cysteine 34, cysteine 20-cysteine 39, and cysteine 24-cysteine 41.

The protein localises to the secreted. Antibacterial protein. Strong activity against the Gram-positive bacteria M.luteus, B.megaterium and S.aureus. Reduced activity against Gram-positive bacterium B.subtilis and weak activity against Gram-negative bacterium X.japonicus. No detectable activity against the Gram-negative bacteria E.asbriae, E.coli, P.aeruginosa and S.marcescens. This chain is Defensin-A, found in Anomala cuprea (Cupreous chafer beetle).